The following is a 280-amino-acid chain: Urease accessory protein UreD 1 (280 aa).

It belongs to the UreD family. In terms of assembly, ureD, UreF and UreG form a complex that acts as a GTP-hydrolysis-dependent molecular chaperone, activating the urease apoprotein by helping to assemble the nickel containing metallocenter of UreC. The UreE protein probably delivers the nickel.

It is found in the cytoplasm. Required for maturation of urease via the functional incorporation of the urease nickel metallocenter. The sequence is that of Urease accessory protein UreD 1 from Brucella canis (strain ATCC 23365 / NCTC 10854 / RM-666).